A 411-amino-acid chain; its full sequence is Glutamate dehydrogenase (411 aa).

Lys102 is a catalytic residue.

The protein belongs to the Glu/Leu/Phe/Val dehydrogenases family.

It carries out the reaction L-glutamate + NAD(+) + H2O = 2-oxoglutarate + NH4(+) + NADH + H(+). The enzyme catalyses L-glutamate + NADP(+) + H2O = 2-oxoglutarate + NH4(+) + NADPH + H(+). The protein is Glutamate dehydrogenase (GDH) of Vitis vinifera (Grape).